Here is a 206-residue protein sequence, read N- to C-terminus: Large ribosomal subunit protein uL4 (206 aa).

Polar residues predominate over residues 42–54 (RRQQGTHQSQGRS). The interval 42-94 (RRQQGTHQSQGRSDVSRTGAKMFKQKGTGRARHSSARAPQFRGGGKAHGPVFR) is disordered. The segment covering 64-76 (FKQKGTGRARHSS) has biased composition (basic residues).

It belongs to the universal ribosomal protein uL4 family. In terms of assembly, part of the 50S ribosomal subunit.

Functionally, one of the primary rRNA binding proteins, this protein initially binds near the 5'-end of the 23S rRNA. It is important during the early stages of 50S assembly. It makes multiple contacts with different domains of the 23S rRNA in the assembled 50S subunit and ribosome. In terms of biological role, forms part of the polypeptide exit tunnel. This chain is Large ribosomal subunit protein uL4, found in Bartonella tribocorum (strain CIP 105476 / IBS 506).